We begin with the raw amino-acid sequence, 133 residues long: uncharacterized protein (133 aa).

This is an uncharacterized protein from Homo sapiens (Human).